The sequence spans 117 residues: MRVKGGSTTRQRRRRWLKLAKGYWGHKSIGFKTAKQAVVKSWTYAFRDRKQRKRDFRKLWISRINAAARNQGISYSQLMHKIKQSNIEINRKMLAEMAIHHQSDFENIVKLAIAKSA.

This sequence belongs to the bacterial ribosomal protein bL20 family.

Its function is as follows. Binds directly to 23S ribosomal RNA and is necessary for the in vitro assembly process of the 50S ribosomal subunit. It is not involved in the protein synthesizing functions of that subunit. The polypeptide is Large ribosomal subunit protein bL20 (Mesomycoplasma hyopneumoniae (strain 232) (Mycoplasma hyopneumoniae)).